A 130-amino-acid polypeptide reads, in one-letter code: Small ribosomal subunit protein uS11c (130 aa).

The protein belongs to the universal ribosomal protein uS11 family. Part of the 30S ribosomal subunit.

Its subcellular location is the plastid. It is found in the chloroplast. This is Small ribosomal subunit protein uS11c from Marchantia polymorpha (Common liverwort).